Here is a 1217-residue protein sequence, read N- to C-terminus: Inactive disease resistance protein RPS4 (1217 aa).

The TIR domain occupies 14-175 (PQHQVFINFR…EIVKAVKTAL (162 aa)). Glutamate 88 is a catalytic residue. In terms of domain architecture, NB-ARC spans 211–472 (EQRLKDLEEK…FRSQDKDYVE (262 aa)). LRR repeat units follow at residues 260-285 (HALI…LLGE), 436-459 (PNIV…AFLD), 614-636 (LKEV…DFNP), 637-659 (INLV…DKDT), 682-706 (AEKL…MKKM), 708-728 (MLAF…EMNL), 729-749 (ISLK…PLIS), 750-774 (DNIE…KLQR), 796-818 (LKAL…EIDI), 819-842 (SFLN…SVQY), and 861-887 (LSQL…NLQC). Residues 1162-1195 (TEGVDGRVKKKKKTRMDNGRPKKKQRSGRDDNQT) are disordered. The Nuclear localization signal motif lies at 1170 to 1177 (KKKKKTRM).

In terms of assembly, interacts with EDS1.

Its subcellular location is the nucleus. It carries out the reaction NAD(+) + H2O = ADP-D-ribose + nicotinamide + H(+). This chain is Inactive disease resistance protein RPS4 (RPS4), found in Arabidopsis thaliana (Mouse-ear cress).